The chain runs to 424 residues: Histidine--tRNA ligase (424 aa).

Belongs to the class-II aminoacyl-tRNA synthetase family. In terms of assembly, homodimer.

It is found in the cytoplasm. The catalysed reaction is tRNA(His) + L-histidine + ATP = L-histidyl-tRNA(His) + AMP + diphosphate + H(+). In Pectobacterium carotovorum subsp. carotovorum (strain PC1), this protein is Histidine--tRNA ligase.